Consider the following 472-residue polypeptide: Succinate-semialdehyde dehydrogenase [NADP(+)] (472 aa).

Residues 134–135 (WN), 158–161 (KHAS), and 210–211 (GS) each bind NADP(+). Glu232 serves as the catalytic Proton acceptor. An NADP(+)-binding site is contributed by Leu233. Cys266 serves as the catalytic Nucleophile. Glu363 contributes to the NADP(+) binding site.

Belongs to the aldehyde dehydrogenase family.

It catalyses the reaction succinate semialdehyde + NADP(+) + H2O = succinate + NADPH + 2 H(+). Its function is as follows. Catalyzes the NADP(+)-dependent oxidation of succinate semialdehyde to succinate. It is believed to be the main source of succinate semialdehyde dehydrogenase activity in Mycobacterium. This chain is Succinate-semialdehyde dehydrogenase [NADP(+)] (gabD1), found in Mycobacterium avium (strain 104).